The sequence spans 268 residues: Tropinone reductase homolog At2g29170 (268 aa).

22–46 (LVTGGSKGLGEAVVEELAMLGARVH) is a binding site for NADP(+). Ser155 lines the substrate pocket. Tyr168 acts as the Proton acceptor in catalysis.

It belongs to the short-chain dehydrogenases/reductases (SDR) family. SDR65C subfamily.

In Arabidopsis thaliana (Mouse-ear cress), this protein is Tropinone reductase homolog At2g29170.